We begin with the raw amino-acid sequence, 472 residues long: Carboxypeptidase Q (472 aa).

The first 20 residues, 1–20, serve as a signal peptide directing secretion; sequence MKFLIFAFFGGVHLLSLCSG. A propeptide spanning residues 21–44 is cleaved from the precursor; it reads KAICKNGISKRTFEEIKEEIASCG. Residues asparagine 61 and asparagine 179 are each glycosylated (N-linked (GlcNAc...) asparagine). Positions 290 and 302 each coordinate Zn(2+). Residue glutamate 336 is the Nucleophile of the active site. Glutamate 337 contacts Zn(2+). N-linked (GlcNAc...) asparagine glycosylation is found at asparagine 353 and asparagine 356. Aspartate 364 serves as a coordination point for Zn(2+). The N-linked (GlcNAc...) asparagine glycan is linked to asparagine 396. Residue histidine 434 participates in Zn(2+) binding.

Belongs to the peptidase M28 family. As to quaternary structure, homodimer. The monomeric form is inactive while the homodimer is active. Post-translationally, N-glycosylated. The secreted form is modified by hybrid or complex type oligosaccharide chains. Mainly detected in blood plasma. Abundant in placenta and kidney. Present at low level in muscles, liver and skin fibroblasts. Not detected in brain or white blood cells (at protein level).

The protein resides in the endoplasmic reticulum. The protein localises to the golgi apparatus. Its subcellular location is the lysosome. It localises to the secreted. Functionally, carboxypeptidase that may play an important role in the hydrolysis of circulating peptides. Catalyzes the hydrolysis of dipeptides with unsubstituted terminals into amino acids. May play a role in the liberation of thyroxine hormone from its thyroglobulin (Tg) precursor. The polypeptide is Carboxypeptidase Q (CPQ) (Homo sapiens (Human)).